A 424-amino-acid chain; its full sequence is STAM-binding protein (424 aa).

An interaction with CHMP3 region spans residues 1 to 127 (MSDHADVSLP…YEQYKERKKK (127 aa)). Residues Ser2 and Ser48 each carry the phosphoserine modification. The segment at 227 to 231 (PAKPP) is interaction with STAM. Position 243 is a phosphoserine (Ser243). An MPN domain is found at 257–388 (IVVPRNLCSE…LTDYGLQEIS (132 aa)). Zn(2+) is bound by residues His335, His337, Asp348, His350, Cys390, His396, and His398. A JAMM motif motif is present at residues 335 to 348 (HTHPTQTAFLSSVD).

The protein belongs to the peptidase M67C family. In terms of assembly, interacts with STAM. Interacts with SMAD6 and SMAD7. Interacts with CHMP3; the interaction appears to relieve the autoinhibition of CHMP3. Interacts with SMURF2 and RNF11; this interaction promotes ubiquitination. The cofactor is Zn(2+). Phosphorylated after BMP type I receptor activation. Post-translationally, ubiquitinated by SMURF2 in the presence of RNF11.

It localises to the nucleus. Its subcellular location is the membrane. The protein localises to the cytoplasm. It is found in the early endosome. With respect to regulation, inhibited by N-ethylmaleimide. Functionally, zinc metalloprotease that specifically cleaves 'Lys-63'-linked polyubiquitin chains. Does not cleave 'Lys-48'-linked polyubiquitin chains. Plays a role in signal transduction for cell growth and MYC induction mediated by IL-2 and GM-CSF. Potentiates BMP (bone morphogenetic protein) signaling by antagonizing the inhibitory action of SMAD6 and SMAD7. Has a key role in regulation of cell surface receptor-mediated endocytosis and ubiquitin-dependent sorting of receptors to lysosomes. Endosomal localization of STAMBP is required for efficient EGFR degradation but not for its internalization. Involved in the negative regulation of PI3K-AKT-mTOR and RAS-MAP signaling pathways. This Rattus norvegicus (Rat) protein is STAM-binding protein (Stambp).